The chain runs to 615 residues: Zinc finger protein 181 (615 aa).

Residues 48 to 120 (VTFSDVAIDF…EKKLSKGLIP (73 aa)) form the KRAB domain. Glycyl lysine isopeptide (Lys-Gly) (interchain with G-Cter in SUMO2) cross-links involve residues K153 and K170. 11 C2H2-type zinc fingers span residues 281–303 (YTCSECGKAFGKQSILNRHWRIH), 309–331 (YECRECGKTFSHGSSLTRHLISH), 337–359 (YKCIECGKAFSHVSSLTNHQSTH), 365–387 (YECMNCGKSFSRVSHLIEHLRIH), 393–415 (YECRICGKAFIHRSSLIHHQKIH), 421–443 (YECRECGKAFCCSSHLTRHQRIH), 449–471 (YECNKCLKVFSSLSFLVQHQSIH), 477–499 (FECQKCRKSFNQLESLNMHLRNH), 505–527 (YECSICGKAFSHRSSLLQHHRIH), 533–555 (YECIKCGKTFSCSSNLTVHQRIH), and 561–583 (YKCNECGKAFSKGSNLTAHQRVH).

The protein belongs to the krueppel C2H2-type zinc-finger protein family.

The protein localises to the nucleus. Its function is as follows. May be involved in transcriptional regulation. This chain is Zinc finger protein 181 (ZNF181), found in Pongo abelii (Sumatran orangutan).